Here is an 85-residue protein sequence, read N- to C-terminus: MPKLEMMLLVLLILPLCYIDAVGPPPPWNMEDEIIEHWQKLHCHEISDLTPWILCSPEPLCGGKGCCAQEVCDCSGTACTCPPCL.

Residues 1–21 form the signal peptide; that stretch reads MPKLEMMLLVLLILPLCYIDA. Residues 22 to 40 constitute a propeptide that is removed on maturation; the sequence is VGPPPPWNMEDEIIEHWQK.

This sequence belongs to the conotoxin D superfamily. Post-translationally, contains 5 disulfide bonds. In terms of tissue distribution, expressed by the venom duct.

The protein resides in the secreted. In terms of biological role, probable neurotoxin. The polypeptide is Conotoxin Lt28.4 (Conus litteratus (Lettered cone)).